A 428-amino-acid chain; its full sequence is Phosphomethylpyrimidine synthase 2 (428 aa).

Substrate is bound by residues M94, Y123, H162, 184–186 (SRG), 225–228 (NGMR), and E264. Residue H268 participates in Zn(2+) binding. Substrate is bound at residue Y291. H332 is a Zn(2+) binding site. Residues C408, C411, and C415 each coordinate [4Fe-4S] cluster.

This sequence belongs to the ThiC family. It depends on [4Fe-4S] cluster as a cofactor.

It carries out the reaction 5-amino-1-(5-phospho-beta-D-ribosyl)imidazole + S-adenosyl-L-methionine = 4-amino-2-methyl-5-(phosphooxymethyl)pyrimidine + CO + 5'-deoxyadenosine + formate + L-methionine + 3 H(+). The protein operates within cofactor biosynthesis; thiamine diphosphate biosynthesis. Its function is as follows. Catalyzes the synthesis of the hydroxymethylpyrimidine phosphate (HMP-P) moiety of thiamine from aminoimidazole ribotide (AIR) in a radical S-adenosyl-L-methionine (SAM)-dependent reaction. The sequence is that of Phosphomethylpyrimidine synthase 2 from Methanosarcina mazei (strain ATCC BAA-159 / DSM 3647 / Goe1 / Go1 / JCM 11833 / OCM 88) (Methanosarcina frisia).